Reading from the N-terminus, the 305-residue chain is Probable lipid kinase YegS-like (305 aa).

The DAGKc domain occupies 1 to 129 (MTQRRAMLIL…VDLGEVGGKL (129 aa)). ATP contacts are provided by residues T39, 65–71 (GDGTLRD), and T92. Mg(2+) is bound by residues L210, D213, and L215. Residue E268 is the Proton acceptor of the active site.

Belongs to the diacylglycerol/lipid kinase family. YegS lipid kinase subfamily. Mg(2+) is required as a cofactor. Requires Ca(2+) as cofactor.

It is found in the cytoplasm. Its function is as follows. Probably phosphorylates lipids; the in vivo substrate is unknown. The sequence is that of Probable lipid kinase YegS-like from Pseudomonas syringae pv. syringae (strain B728a).